A 211-amino-acid polypeptide reads, in one-letter code: Succinate dehydrogenase subunit 4, mitochondrial (211 aa).

The N-terminal 36 residues, 1-36 (MASRLLARSKALALALSRADAAAPGPAAGVQWLRTL), are a transit peptide targeting the mitochondrion. The interval 41 to 64 (RDPAAAASPAPAPRQPAVGSPLGL) is disordered. Histidine 166 provides a ligand contact to heme. Residue tyrosine 179 coordinates a ubiquinone. A helical transmembrane segment spans residues 188–210 (WVFIYFKILLIIMAKETVVYFDL).

As to quaternary structure, component of complex II composed of eight subunits in plants: four classical SDH subunits SDH1, SDH2, SDH3 and SDH4 (a flavoprotein (FP), an iron-sulfur protein (IP), and a cytochrome b composed of a large and a small subunit.), as well as four subunits unknown in mitochondria from bacteria and heterotrophic eukaryotes. The cofactor is heme.

The protein resides in the mitochondrion inner membrane. It participates in carbohydrate metabolism; tricarboxylic acid cycle. In terms of biological role, membrane-anchoring subunit of succinate dehydrogenase (SDH). This chain is Succinate dehydrogenase subunit 4, mitochondrial, found in Oryza sativa subsp. japonica (Rice).